We begin with the raw amino-acid sequence, 431 residues long: Enolase (431 aa).

Q167 provides a ligand contact to (2R)-2-phosphoglycerate. The active-site Proton donor is E209. Positions 246, 289, and 316 each coordinate Mg(2+). The (2R)-2-phosphoglycerate site is built by K341, R370, S371, and K392. The Proton acceptor role is filled by K341.

It belongs to the enolase family. As to quaternary structure, component of the RNA degradosome, a multiprotein complex involved in RNA processing and mRNA degradation. It depends on Mg(2+) as a cofactor.

Its subcellular location is the cytoplasm. The protein localises to the secreted. The protein resides in the cell surface. It catalyses the reaction (2R)-2-phosphoglycerate = phosphoenolpyruvate + H2O. Its pathway is carbohydrate degradation; glycolysis; pyruvate from D-glyceraldehyde 3-phosphate: step 4/5. Its function is as follows. Catalyzes the reversible conversion of 2-phosphoglycerate (2-PG) into phosphoenolpyruvate (PEP). It is essential for the degradation of carbohydrates via glycolysis. In Shewanella baltica (strain OS223), this protein is Enolase.